A 556-amino-acid polypeptide reads, in one-letter code: Acetyl-coenzyme A thioesterase (556 aa).

One can recognise a HotDog ACOT-type 1 domain in the interval 6-118 (APGEVLMSQA…FSTFVAKPVG (113 aa)). Lys-34 is modified (N6-succinyllysine). CoA contacts are provided by residues 54 to 56 (TAS) and 83 to 85 (STS). An N6-succinyllysine modification is found at Lys-97. Arg-145 serves as a coordination point for CoA. 2 positions are modified to N6-succinyllysine: Lys-160 and Lys-229. Positions 180–295 (MGTSVQSIEL…FLIYNAVDDQ (116 aa)) constitute a HotDog ACOT-type 2 domain. Residue 235-237 (KFR) coordinates CoA. The START domain maps to 327–536 (GRKYVISHKK…GGWSKSIEEA (210 aa)).

As to quaternary structure, homodimer or homotetramer.

It localises to the cytoplasm. The protein localises to the cytosol. The enzyme catalyses acetyl-CoA + H2O = acetate + CoA + H(+). It carries out the reaction butanoyl-CoA + H2O = butanoate + CoA + H(+). The catalysed reaction is hexanoyl-CoA + H2O = hexanoate + CoA + H(+). Its pathway is lipid metabolism; fatty acid metabolism. With respect to regulation, allosterically regulated by ATP (activator) and ADP (inhibitor). Cold labile, it dissociates into inactive monomers at low temperature. Functionally, catalyzes the hydrolysis of acyl-CoAs into free fatty acids and coenzyme A (CoASH), regulating their respective intracellular levels. Preferentially hydrolyzes acetyl-CoA. The polypeptide is Acetyl-coenzyme A thioesterase (Acot12) (Mus musculus (Mouse)).